The sequence spans 599 residues: Elongation factor 4 (599 aa).

One can recognise a tr-type G domain in the interval 5 to 187 (SHIRNFSIIA…RLVTAIPAPE (183 aa)). GTP is bound by residues 17–22 (DHGKST) and 134–137 (NKMD).

Belongs to the TRAFAC class translation factor GTPase superfamily. Classic translation factor GTPase family. LepA subfamily.

The protein localises to the cell inner membrane. The catalysed reaction is GTP + H2O = GDP + phosphate + H(+). Its function is as follows. Required for accurate and efficient protein synthesis under certain stress conditions. May act as a fidelity factor of the translation reaction, by catalyzing a one-codon backward translocation of tRNAs on improperly translocated ribosomes. Back-translocation proceeds from a post-translocation (POST) complex to a pre-translocation (PRE) complex, thus giving elongation factor G a second chance to translocate the tRNAs correctly. Binds to ribosomes in a GTP-dependent manner. In Pseudomonas aeruginosa (strain LESB58), this protein is Elongation factor 4.